The following is a 540-amino-acid chain: MAAIVAIGRKLARTPQWRIVQHQSLLRRAVSTSFSSSVSQNHSFSSAFHRAGHVHSQVLSYLPHFASSNRFSTKTISETFDINLTALAPLEKGLIDLIRQVSELESEADAMASLEDSSFDLNHDSFYSLIWELRDEWRLAFLAFKWGEKRGCDDQKSCDLMIWVLGNHQKFNIAWCLIRDMFNVSKDTRKAMFLMMDRYAAANDTSQAIRTFDIMDKFKHTPYDEAFQGLLCALCRHGHIEKAEEFMLASKKLFPVDVEGFNVILNGWCNIWTDVTEAKRIWREMGNYCITPNKDSYSHMISCFSKVGNLFDSLRLYDEMKKRGLAPGIEVYNSLVYVLTREDCFDEAMKLMKKLNEEGLKPDSVTYNSMIRPLCEAGKLDVARNVLATMISENLSPTVDTFHAFLEAVNFEKTLEVLGQMKISDLGPTEETFLLILGKLFKGKQPENALKIWAEMDRFEIVANPALYLATIQGLLSCGWLEKAREIYSEMKSKGFVGNPMLQKLLEEQKVKGVRKSKRMNLQKVGSQEGYKGQRSVDRK.

The transit peptide at 1–87 (MAAIVAIGRK…ETFDINLTAL (87 aa)) directs the protein to the mitochondrion. PPR repeat units lie at residues 154–184 (DQKS…MFNV), 188–222 (TRKA…KHTP), 223–253 (YDEA…SKKL), 257–292 (DVEG…CITP), 293–327 (NKDS…GLAP), 328–362 (GIEV…GLKP), 363–397 (DSVT…NLSP), 402–428 (FHAF…DLGP), 429–463 (TEET…EIVA), and 464–498 (NPAL…GFVG). The tract at residues 514–540 (VRKSKRMNLQKVGSQEGYKGQRSVDRK) is disordered.

It belongs to the PPR family. P subfamily.

It is found in the mitochondrion. This chain is Pentatricopeptide repeat-containing protein At1g80880, mitochondrial, found in Arabidopsis thaliana (Mouse-ear cress).